The sequence spans 34 residues: Photosystem I reaction center subunit XII (34 aa).

The helical transmembrane segment at Ile-5–Leu-25 threads the bilayer.

It belongs to the PsaM family.

The protein resides in the cellular thylakoid membrane. This is Photosystem I reaction center subunit XII from Synechococcus sp. (strain CC9902).